A 169-amino-acid polypeptide reads, in one-letter code: Small ribosomal subunit protein bS18c (169 aa).

The disordered stretch occupies residues methionine 1–arginine 61. A compositionally biased stretch (basic residues) spans glutamine 27–arginine 55.

Belongs to the bacterial ribosomal protein bS18 family. Part of the 30S ribosomal subunit.

It localises to the plastid. It is found in the chloroplast. The protein is Small ribosomal subunit protein bS18c of Agrostis stolonifera (Creeping bentgrass).